The chain runs to 311 residues: Phosphoribosylamine--glycine ligase (311 aa).

The region spanning 1–191 (DPRVRKQYIQ…LVQVLLAACR (191 aa)) is the ATP-grasp domain.

Belongs to the GARS family.

The protein resides in the plastid. The protein localises to the chloroplast. It carries out the reaction 5-phospho-beta-D-ribosylamine + glycine + ATP = N(1)-(5-phospho-beta-D-ribosyl)glycinamide + ADP + phosphate + H(+). The protein operates within purine metabolism; IMP biosynthesis via de novo pathway; N(1)-(5-phospho-D-ribosyl)glycinamide from 5-phospho-alpha-D-ribose 1-diphosphate: step 2/2. This Vigna unguiculata (Cowpea) protein is Phosphoribosylamine--glycine ligase (PUR2).